The primary structure comprises 350 residues: Chorismate synthase (350 aa).

NADP(+) contacts are provided by Arg-39 and Arg-45. The segment at 85–104 is disordered; it reads KDKKVPPVTRPRPGHADLPG. Residues 119–121, 213–214, Gly-258, 273–277, and Arg-299 contribute to the FMN site; these read RAS, QG, and KPIPT.

The protein belongs to the chorismate synthase family. As to quaternary structure, homotetramer. FMNH2 serves as cofactor.

The catalysed reaction is 5-O-(1-carboxyvinyl)-3-phosphoshikimate = chorismate + phosphate. Its pathway is metabolic intermediate biosynthesis; chorismate biosynthesis; chorismate from D-erythrose 4-phosphate and phosphoenolpyruvate: step 7/7. Catalyzes the anti-1,4-elimination of the C-3 phosphate and the C-6 proR hydrogen from 5-enolpyruvylshikimate-3-phosphate (EPSP) to yield chorismate, which is the branch point compound that serves as the starting substrate for the three terminal pathways of aromatic amino acid biosynthesis. This reaction introduces a second double bond into the aromatic ring system. This Caldanaerobacter subterraneus subsp. tengcongensis (strain DSM 15242 / JCM 11007 / NBRC 100824 / MB4) (Thermoanaerobacter tengcongensis) protein is Chorismate synthase.